A 132-amino-acid chain; its full sequence is Fluoride-specific ion channel FluC 2 (132 aa).

Helical transmembrane passes span 5-25 (VAVF…NLLG), 34-54 (TFIE…FFAA), 59-79 (PLVQ…MSAF), and 95-115 (VLYL…GIVI). Gly-71 and Thr-74 together coordinate Na(+).

It belongs to the fluoride channel Fluc/FEX (TC 1.A.43) family.

The protein localises to the cell membrane. The catalysed reaction is fluoride(in) = fluoride(out). Its activity is regulated as follows. Na(+) is not transported, but it plays an essential structural role and its presence is essential for fluoride channel function. In terms of biological role, fluoride-specific ion channel. Important for reducing fluoride concentration in the cell, thus reducing its toxicity. The protein is Fluoride-specific ion channel FluC 2 of Bacillus licheniformis (strain ATCC 14580 / DSM 13 / JCM 2505 / CCUG 7422 / NBRC 12200 / NCIMB 9375 / NCTC 10341 / NRRL NRS-1264 / Gibson 46).